The primary structure comprises 349 residues: 3-isopropylmalate dehydrogenase (349 aa).

Residues Arg-91, Arg-101, Arg-129, and Asp-219 each coordinate substrate. Asp-219, Asp-243, and Asp-247 together coordinate Mg(2+). 277-289 (GSAPDIAGLGKAN) serves as a coordination point for NAD(+).

Belongs to the isocitrate and isopropylmalate dehydrogenases family. LeuB type 1 subfamily. Homodimer. Mg(2+) serves as cofactor. It depends on Mn(2+) as a cofactor.

The protein resides in the cytoplasm. The enzyme catalyses (2R,3S)-3-isopropylmalate + NAD(+) = 4-methyl-2-oxopentanoate + CO2 + NADH. Its pathway is amino-acid biosynthesis; L-leucine biosynthesis; L-leucine from 3-methyl-2-oxobutanoate: step 3/4. Its function is as follows. Catalyzes the oxidation of 3-carboxy-2-hydroxy-4-methylpentanoate (3-isopropylmalate) to 3-carboxy-4-methyl-2-oxopentanoate. The product decarboxylates to 4-methyl-2 oxopentanoate. This is 3-isopropylmalate dehydrogenase from Zymomonas mobilis subsp. mobilis (strain ATCC 31821 / ZM4 / CP4).